Here is a 232-residue protein sequence, read N- to C-terminus: uncharacterized protein (232 aa).

Residues 86–95 (RGLPRPEFKA) are compositionally biased toward basic and acidic residues. A disordered region spans residues 86 to 107 (RGLPRPEFKANGHPSMDAEADD).

This is an uncharacterized protein from Sinorhizobium fredii (strain NBRC 101917 / NGR234).